We begin with the raw amino-acid sequence, 327 residues long: Malate dehydrogenase (327 aa).

Position 12–18 (12–18 (GAAGQIG)) interacts with NAD(+). Substrate-binding residues include arginine 93 and arginine 99. NAD(+) is bound by residues asparagine 106, glutamine 113, and 130 to 132 (VGN). Residues asparagine 132 and arginine 163 each coordinate substrate. Histidine 188 acts as the Proton acceptor in catalysis.

Belongs to the LDH/MDH superfamily. MDH type 2 family.

The enzyme catalyses (S)-malate + NAD(+) = oxaloacetate + NADH + H(+). Its function is as follows. Catalyzes the reversible oxidation of malate to oxaloacetate. This chain is Malate dehydrogenase, found in Paraburkholderia phymatum (strain DSM 17167 / CIP 108236 / LMG 21445 / STM815) (Burkholderia phymatum).